A 332-amino-acid polypeptide reads, in one-letter code: L-lactate dehydrogenase A chain (332 aa).

Residue Ala2 is modified to N-acetylalanine. Residue Lys5 is modified to N6-acetyllysine; alternate. At Lys5 the chain carries N6-succinyllysine; alternate. An N6-acetyllysine modification is found at Lys14. 29–57 (GAVGMACAISILMKDLADELALVDVMEDK) provides a ligand contact to NAD(+). Residue Lys57 is modified to N6-acetyllysine; alternate. Lys57 participates in a covalent cross-link: Glycyl lysine isopeptide (Lys-Gly) (interchain with G-Cter in SUMO2); alternate. An N6-acetyllysine modification is found at Lys81. Arg99 is a binding site for NAD(+). Arg106 serves as a coordination point for substrate. At Lys118 the chain carries N6-acetyllysine; alternate. Lys118 bears the N6-succinyllysine; alternate mark. Lys126 bears the N6-acetyllysine mark. NAD(+) is bound at residue Asn138. Asn138 and Arg169 together coordinate substrate. Catalysis depends on His193, which acts as the Proton acceptor. Residues Lys224 and Lys232 each carry the N6-acetyllysine modification. Residue Tyr239 is modified to Phosphotyrosine. Lys243 bears the N6-acetyllysine mark. Thr248 contributes to the substrate binding site. Thr309 carries the post-translational modification Phosphothreonine. Residue Lys318 is modified to N6-acetyllysine; alternate. Lys318 is modified (N6-succinyllysine; alternate). Phosphothreonine is present on Thr322.

Belongs to the LDH/MDH superfamily. LDH family. Homotetramer. Interacts with PTEN upstream reading frame protein MP31. In terms of processing, ISGylated.

The protein localises to the cytoplasm. The catalysed reaction is (S)-lactate + NAD(+) = pyruvate + NADH + H(+). It functions in the pathway fermentation; pyruvate fermentation to lactate; (S)-lactate from pyruvate: step 1/1. Functionally, interconverts simultaneously and stereospecifically pyruvate and lactate with concomitant interconversion of NADH and NAD(+). The protein is L-lactate dehydrogenase A chain (Ldha) of Mus musculus (Mouse).